The primary structure comprises 180 residues: Probable RNA 2'-phosphotransferase (180 aa).

It belongs to the KptA/TPT1 family.

In terms of biological role, removes the 2'-phosphate from RNA via an intermediate in which the phosphate is ADP-ribosylated by NAD followed by a presumed transesterification to release the RNA and generate ADP-ribose 1''-2''-cyclic phosphate (APPR&gt;P). May function as an ADP-ribosylase. The polypeptide is Probable RNA 2'-phosphotransferase (Pectobacterium atrosepticum (strain SCRI 1043 / ATCC BAA-672) (Erwinia carotovora subsp. atroseptica)).